A 451-amino-acid polypeptide reads, in one-letter code: Prenyltransferase asqH1 (451 aa).

The segment at 14-37 (AEDQSTRKVHWGQEGSGQSPEARP) is disordered. Residue glutamate 120 participates in L-tryptophan binding. Substrate-binding residues include arginine 137, arginine 274, lysine 276, tyrosine 278, and tyrosine 373.

The protein belongs to the tryptophan dimethylallyltransferase family.

It catalyses the reaction quinolinone B + dimethylallyl diphosphate = peniprequinolone + diphosphate. The protein operates within secondary metabolite biosynthesis. Its pathway is alkaloid biosynthesis. It functions in the pathway mycotoxin biosynthesis. In terms of biological role, prenyltransferase; part of the gene cluster that mediates the biosynthesis of the aspoquinolone mycotoxins. Within the pathway, the prenyltransferase asqH1 catalyzes the canonical Friedel-Crafts alkylation of quinolinone B with dimethylallyl cation to yield dimethylallyl quinolone. The first step of the pathway is catalyzed by the nonribosomal peptide synthetase asqK that condenses anthranilic acid and O-methyl-L-tyrosine to produce 4'-methoxycyclopeptin. 4'-methoxycyclopeptin is then converted to 4'-methoxydehydrocyclopeptin by the ketoglutarate-dependent dioxygenase asqJ. AsqJ also converts its first product 4'-methoxydehydrocyclopeptin to 4'-methoxycyclopenin. The following conversion of 4'-methoxycyclopenin into 4'-methoxyviridicatin is catalyzed by the cyclopenase asqI. 4'-methoxyviridicatin is the precursor of quinolone natural products, and is further converted to quinolinone B. The prenyltransferase asqH1 then catalyzes the canonical Friedel-Crafts alkylation of quinolinone B with dimethylallyl cation to yield dimethylallyl quinolone, which is subjected to FAD-dependent dehydrogenation by the FAD-linked oxidoreductase asqF to yield conjugated aryl diene. The delta(3') double bond then serves as the site of the second alkylation with DMAPP catalyzed by the prenyltransferase asqH2 to yield a carbenium ion intermediate, which can be attacked by H(2)O to yield a styrenyl quinolone containing a C3'-hydroxyprenyl chain. The FAD-dependent monooxygenase asqG performs epoxidation of the terminal C7'-C8' olefin. Finally, after dehydratation of the epoxide at C3 by asqC, the quinolone epoxide rearrangement protein asqO catalyzes an enzymatic 3-exo-tet cyclization to yield the cyclopropyl-THF ring system in aspoquinolone. The chain is Prenyltransferase asqH1 from Emericella nidulans (strain FGSC A4 / ATCC 38163 / CBS 112.46 / NRRL 194 / M139) (Aspergillus nidulans).